The sequence spans 760 residues: Catalase-peroxidase (760 aa).

The tract at residues 1 to 24 (MAESKCPFKSQGSRSNVAGGGTRN) is disordered. Positions 96–242 (WHSAGTYRVF…LAAAHMGLIY (147 aa)) form a cross-link, tryptophyl-tyrosyl-methioninium (Trp-Tyr) (with M-268). Residue histidine 97 is the Proton acceptor of the active site. Positions 242 to 268 (YVNPEGPDGNPDPVAAAHDIRVTFGRM) form a cross-link, tryptophyl-tyrosyl-methioninium (Tyr-Met) (with W-96). Histidine 283 provides a ligand contact to heme b.

It belongs to the peroxidase family. Peroxidase/catalase subfamily. As to quaternary structure, homodimer or homotetramer. Heme b serves as cofactor. Post-translationally, formation of the three residue Trp-Tyr-Met cross-link is important for the catalase, but not the peroxidase activity of the enzyme.

Its subcellular location is the cytoplasm. It catalyses the reaction H2O2 + AH2 = A + 2 H2O. The enzyme catalyses 2 H2O2 = O2 + 2 H2O. Functionally, bifunctional enzyme with both catalase and broad-spectrum peroxidase activity. The chain is Catalase-peroxidase from Aspergillus clavatus (strain ATCC 1007 / CBS 513.65 / DSM 816 / NCTC 3887 / NRRL 1 / QM 1276 / 107).